The chain runs to 206 residues: HTH-type transcriptional regulator BetI (206 aa).

The HTH tetR-type domain maps to Pro-8–Leu-68. A DNA-binding region (H-T-H motif) is located at residues Thr-31–Phe-50.

The protein operates within amine and polyamine biosynthesis; betaine biosynthesis via choline pathway [regulation]. Its function is as follows. Repressor involved in the biosynthesis of the osmoprotectant glycine betaine. It represses transcription of the choline transporter BetT and the genes of BetAB involved in the synthesis of glycine betaine. This is HTH-type transcriptional regulator BetI from Agrobacterium fabrum (strain C58 / ATCC 33970) (Agrobacterium tumefaciens (strain C58)).